Here is a 317-residue protein sequence, read N- to C-terminus: Putative ribosomal protein uL10-like (317 aa).

At tyrosine 24 the chain carries Phosphotyrosine. Position 59 is a phosphothreonine (threonine 59). Residues 292 to 317 (AAAPAKVEAKEESEESDEDMGFGLFD) form a disordered region. Lysine 297 participates in a covalent cross-link: Glycyl lysine isopeptide (Lys-Gly) (interchain with G-Cter in SUMO1); alternate. Lysine 297 participates in a covalent cross-link: Glycyl lysine isopeptide (Lys-Gly) (interchain with G-Cter in SUMO2); alternate. The span at 302–311 (EESEESDEDM) shows a compositional bias: acidic residues. Phosphoserine is present on residues serine 304 and serine 307.

Belongs to the universal ribosomal protein uL10 family. As to quaternary structure, P0 forms a pentameric complex by interaction with dimers of P1 and P2.

In terms of biological role, ribosomal protein P0 is the functional equivalent of E.coli protein L10. The chain is Putative ribosomal protein uL10-like (RPLP0P6) from Homo sapiens (Human).